The primary structure comprises 426 residues: Glutamyl-tRNA reductase (426 aa).

Residues 52 to 55 (TCNR), Ser110, 115 to 117 (EYE), and Gln121 each bind substrate. Cys53 functions as the Nucleophile in the catalytic mechanism. NADP(+) is bound at residue 190–195 (GAGEMG).

Belongs to the glutamyl-tRNA reductase family. As to quaternary structure, homodimer.

It carries out the reaction (S)-4-amino-5-oxopentanoate + tRNA(Glu) + NADP(+) = L-glutamyl-tRNA(Glu) + NADPH + H(+). Its pathway is porphyrin-containing compound metabolism; protoporphyrin-IX biosynthesis; 5-aminolevulinate from L-glutamyl-tRNA(Glu): step 1/2. Its function is as follows. Catalyzes the NADPH-dependent reduction of glutamyl-tRNA(Glu) to glutamate 1-semialdehyde (GSA). The protein is Glutamyl-tRNA reductase of Saccharolobus islandicus (strain Y.N.15.51 / Yellowstone #2) (Sulfolobus islandicus).